Reading from the N-terminus, the 145-residue chain is Probable thioredoxin-2 (145 aa).

In terms of domain architecture, Thioredoxin spans 39–144; that stretch reads VFDIDSVEDF…LDDFIEDVLA (106 aa). Catalysis depends on nucleophile residues Cys68 and Cys71. Cys68 and Cys71 are joined by a disulfide.

Belongs to the thioredoxin family.

In terms of biological role, participates in various redox reactions through the reversible oxidation of its active center dithiol to a disulfide and catalyzes dithiol-disulfide exchange reactions. This is Probable thioredoxin-2 (trx-2) from Caenorhabditis elegans.